We begin with the raw amino-acid sequence, 278 residues long: Digeranylgeranylglyceryl phosphate synthase (278 aa).

The next 8 helical transmembrane spans lie at 12 to 32 (LKNC…ASYF), 34 to 54 (LAMV…CGFG), 92 to 112 (LVVM…MAVL), 129 to 149 (IIGN…GGIA), 153 to 173 (IDVT…REII), 204 to 224 (FLLI…FFGI), 226 to 246 (YMIS…KLVF), and 257 to 277 (SRNI…GSLF).

Belongs to the UbiA prenyltransferase family. DGGGP synthase subfamily. Mg(2+) is required as a cofactor.

Its subcellular location is the cell membrane. The catalysed reaction is sn-3-O-(geranylgeranyl)glycerol 1-phosphate + (2E,6E,10E)-geranylgeranyl diphosphate = 2,3-bis-O-(geranylgeranyl)-sn-glycerol 1-phosphate + diphosphate. Its pathway is membrane lipid metabolism; glycerophospholipid metabolism. In terms of biological role, prenyltransferase that catalyzes the transfer of the geranylgeranyl moiety of geranylgeranyl diphosphate (GGPP) to the C2 hydroxyl of (S)-3-O-geranylgeranylglyceryl phosphate (GGGP). This reaction is the second ether-bond-formation step in the biosynthesis of archaeal membrane lipids. The polypeptide is Digeranylgeranylglyceryl phosphate synthase (Methanococcus maripaludis (strain DSM 14266 / JCM 13030 / NBRC 101832 / S2 / LL)).